The chain runs to 163 residues: Large ribosomal subunit protein uL11 (163 aa).

Residues 1–26 (MAETIEVLVAGGQADPGPPLGPELGP) form a disordered region.

It belongs to the universal ribosomal protein uL11 family. Part of the ribosomal stalk of the 50S ribosomal subunit. Interacts with L10 and the large rRNA to form the base of the stalk. L10 forms an elongated spine to which L12 dimers bind in a sequential fashion forming a multimeric L10(L12)X complex.

Its function is as follows. Forms part of the ribosomal stalk which helps the ribosome interact with GTP-bound translation factors. The polypeptide is Large ribosomal subunit protein uL11 (Halobacterium salinarum (strain ATCC 29341 / DSM 671 / R1)).